The following is a 510-amino-acid chain: Bifunctional purine biosynthesis protein PurH (510 aa).

The region spanning Met-1–Cys-142 is the MGS-like domain.

It belongs to the PurH family.

The enzyme catalyses (6R)-10-formyltetrahydrofolate + 5-amino-1-(5-phospho-beta-D-ribosyl)imidazole-4-carboxamide = 5-formamido-1-(5-phospho-D-ribosyl)imidazole-4-carboxamide + (6S)-5,6,7,8-tetrahydrofolate. The catalysed reaction is IMP + H2O = 5-formamido-1-(5-phospho-D-ribosyl)imidazole-4-carboxamide. It functions in the pathway purine metabolism; IMP biosynthesis via de novo pathway; 5-formamido-1-(5-phospho-D-ribosyl)imidazole-4-carboxamide from 5-amino-1-(5-phospho-D-ribosyl)imidazole-4-carboxamide (10-formyl THF route): step 1/1. Its pathway is purine metabolism; IMP biosynthesis via de novo pathway; IMP from 5-formamido-1-(5-phospho-D-ribosyl)imidazole-4-carboxamide: step 1/1. This is Bifunctional purine biosynthesis protein PurH from Campylobacter jejuni subsp. jejuni serotype O:2 (strain ATCC 700819 / NCTC 11168).